We begin with the raw amino-acid sequence, 37 residues long: Large ribosomal subunit protein bL36 (37 aa).

Belongs to the bacterial ribosomal protein bL36 family.

The sequence is that of Large ribosomal subunit protein bL36 from Geobacillus kaustophilus (strain HTA426).